The primary structure comprises 51 residues: Large ribosomal subunit protein bL33 (51 aa).

Residues 1–24 form a disordered region; it reads MREKIRLNSSAGTGHFYTTDKNKR.

It belongs to the bacterial ribosomal protein bL33 family.

This is Large ribosomal subunit protein bL33 from Cellvibrio japonicus (strain Ueda107) (Pseudomonas fluorescens subsp. cellulosa).